Reading from the N-terminus, the 295-residue chain is UDP-N-acetylenolpyruvoylglucosamine reductase (295 aa).

The FAD-binding PCMH-type domain maps to 24 to 188 (KVGGDAEIFF…LKAVFKVNKG (165 aa)). Residue arginine 168 is part of the active site. Residue serine 217 is the Proton donor of the active site. The active site involves glutamate 287.

The protein belongs to the MurB family. Requires FAD as cofactor.

The protein resides in the cytoplasm. The enzyme catalyses UDP-N-acetyl-alpha-D-muramate + NADP(+) = UDP-N-acetyl-3-O-(1-carboxyvinyl)-alpha-D-glucosamine + NADPH + H(+). The protein operates within cell wall biogenesis; peptidoglycan biosynthesis. Functionally, cell wall formation. The polypeptide is UDP-N-acetylenolpyruvoylglucosamine reductase (Rickettsia akari (strain Hartford)).